The chain runs to 703 residues: Metastasis-associated protein MTA1 (703 aa).

In terms of domain architecture, BAH spans 1-164 (MAANMYRVGD…PQQKTLLADK (164 aa)). The ELM2 domain maps to 165 to 276 (GEIRVGNRYQ…KAISALVPQG (112 aa)). A Glycyl lysine isopeptide (Lys-Gly) (interchain with G-Cter in ubiquitin) cross-link involves residue Lys182. The region spanning 283 to 335 (DEMEEWSASEANLFEEALEKYGKDFTDIQQDFLPWKSLTSIIEYYYMWKTTDR) is the SANT domain. Phosphoserine is present on Ser386. The GATA-type; atypical zinc finger occupies 393 to 420 (CESCYTTQSYQWYSWGPPNMQCRLCASC). Residues 437 to 460 (DGERPGPNRNNMSPHGIPARSSGS) form a disordered region. The residue at position 449 (Ser449) is a Phosphoserine. Residue Lys509 forms a Glycyl lysine isopeptide (Lys-Gly) (interchain with G-Cter in SUMO2 and SUMO3) linkage. The residue at position 522 (Ser522) is a Phosphoserine. The segment covering 542–552 (ETHPRPPKPDP) has biased composition (basic and acidic residues). A disordered region spans residues 542–583 (ETHPRPPKPDPVKSSSSVLSSLTPAKSAPVINNGSPTILGKR). The short motif at 545-552 (PRPPKPDP) is the SH3-binding element. Residue Lys549 forms a Glycyl lysine isopeptide (Lys-Gly) (interchain with G-Cter in SUMO2) linkage. Low complexity predominate over residues 553–565 (VKSSSSVLSSLTP). Thr564 is subject to Phosphothreonine. Ser576 is modified (phosphoserine). Thr578 is modified (phosphothreonine). At Lys614 the chain carries N6-acetyllysine; alternate. A Glycyl lysine isopeptide (Lys-Gly) (interchain with G-Cter in ubiquitin); alternate cross-link involves residue Lys614. Residue Ser627 is modified to Phosphoserine. The segment at 644–674 (DVFYMATEETRKIRKLLSSSETKRAARRPYK) is interaction with RBBP4. A disordered region spans residues 661–703 (SSSETKRAARRPYKPIALRQSQALPLRPPPPAPVNDEPIVIED). Positions 684 to 693 (LPLRPPPPAP) match the SH3-binding motif. The short motif at 699-703 (IVIED) is the SUMO interaction motif 1 (SIM); crucial for efficient sumoylation element.

The protein belongs to the metastasis-associated protein family. In terms of assembly, component of the nucleosome remodeling and deacetylase (NuRD) repressor complex, composed of core proteins MTA1, MTA2, MTA3, RBBP4, RBBP7, HDAC1, HDAC2, MBD2, MBD3, and peripherally associated proteins CDK2AP1, CDK2AP2, GATAD2A, GATAD2B, CHD3, CHD4 and CHD5. The exact stoichiometry of the NuRD complex is unknown, and some subunits such as MBD2 and MBD3, GATAD2A and GATAD2B, and CHD3, CHD4 and CHD5 define mutually exclusive NuRD complexes. Interacts with RBBP4; the interaction is direct. Interacts with BMAL1. Interacts with CLOCK. Interacts with COP1. Interacts with CSNK1G2 in the cytoplasm. Interacts with EP300. Interacts with HDAC2. Interacts with ITGB3BP/CENPR. Interacts with MBD3L2. Interacts with MDM2. Interacts with NACC2. Interacts with p53/TP53. Interacts with PIAS1. Interacts with PIAS3. Interacts with PIAS4. Interacts with PWWP2A. Interacts with PWWP2B. Interacts with SENP1. Interacts with SENP2. Interacts with SIX3; facilitates the binding of SIX3 to the core DNA motif of SIX3 promoter. Interacts with SUMO1. Interacts with SUMO2. Interacts with TFCP2L1; which is indispensable for TFCP2L1-mediated self-renewal-promoting effect and endoderm-inhibiting action. Interacts with TFAP2C. Interacts with TPR. Interacts with UBE2I/UBC9. Phosphorylation by CSNK1G2/CK1 triggered by estrogen enhances corepression of estrogen receptor (ER). In terms of processing, acetylation is essential for its transcriptional coactivator activity. Post-translationally, sumoylation positively regulates its transcriptional corepressor activity but does not affect the protein stability. Sumoylated preferentially by SUMO2 or SUMO3 than SUMO1. Sumoylation is enhanced by PIAS1/3/4 and preferentially sumoylated by SUMO2 in the presence of PIAS1/3/4. Desumoylated by SENP1. Ubiquitinated by COP1, which leads to proteasomal degradation. As to expression, isoform 1 abundant in testis and expressed at low levels in brain, heart, lung, liver, and kidney. Isoform 2 abundant in adrenal gland, brain, colon, heart, liver, lung, muscle, prostate, stomach, testis, and thymus and expressed at low levels in duodenum, kidney, pancreas, parotid, and spleen.

Its subcellular location is the nucleus. It is found in the nucleus envelope. It localises to the cytoplasm. The protein resides in the cytoskeleton. The protein localises to the rough endoplasmic reticulum. Its subcellular location is the golgi apparatus. It is found in the zymogen granule. Its function is as follows. Transcriptional coregulator which can act as both a transcriptional corepressor and coactivator. Acts as a component of the histone deacetylase NuRD complex which participates in the remodeling of chromatin. In the NuRD complex, regulates transcription of its targets by modifying the acetylation status of the target chromatin and cofactor accessibility to the target DNA. In conjunction with other components of NuRD, acts as a transcriptional corepressor of BRCA1, ESR1, TFF1 and CDKN1A. Acts as a transcriptional coactivator of BCAS3, and SUMO2, independent of the NuRD complex. Stimulates the expression of WNT1 by inhibiting the expression of its transcriptional corepressor SIX3. Regulates p53-dependent and -independent DNA repair processes following genotoxic stress. Regulates the stability and function of p53/TP53 by inhibiting its ubiquitination by COP1 and MDM2 thereby regulating the p53-dependent DNA repair. Plays a role in the regulation of the circadian clock and is essential for the generation and maintenance of circadian rhythms under constant light and for normal entrainment of behavior to light-dark (LD) cycles. Positively regulates the CLOCK-BMAL1 heterodimer mediated transcriptional activation of its own transcription and the transcription of CRY1. Regulates deacetylation of BMAL1 by regulating SIRT1 expression, resulting in derepressing CRY1-mediated transcription repression. With TFCP2L1, promotes establishment and maintenance of pluripotency in embryonic stem cells (ESCs) and inhibits endoderm differentiation. In Rattus norvegicus (Rat), this protein is Metastasis-associated protein MTA1 (Mta1).